The chain runs to 205 residues: Imidazole glycerol phosphate synthase subunit HisH (205 aa).

The 203-residue stretch at 3–205 (KIGLIDYGMG…LLRRWLSNIQ (203 aa)) folds into the Glutamine amidotransferase type-1 domain. C81 functions as the Nucleophile in the catalytic mechanism. Residues H185 and E187 contribute to the active site.

As to quaternary structure, heterodimer of HisH and HisF.

It localises to the cytoplasm. The enzyme catalyses 5-[(5-phospho-1-deoxy-D-ribulos-1-ylimino)methylamino]-1-(5-phospho-beta-D-ribosyl)imidazole-4-carboxamide + L-glutamine = D-erythro-1-(imidazol-4-yl)glycerol 3-phosphate + 5-amino-1-(5-phospho-beta-D-ribosyl)imidazole-4-carboxamide + L-glutamate + H(+). The catalysed reaction is L-glutamine + H2O = L-glutamate + NH4(+). It functions in the pathway amino-acid biosynthesis; L-histidine biosynthesis; L-histidine from 5-phospho-alpha-D-ribose 1-diphosphate: step 5/9. In terms of biological role, IGPS catalyzes the conversion of PRFAR and glutamine to IGP, AICAR and glutamate. The HisH subunit catalyzes the hydrolysis of glutamine to glutamate and ammonia as part of the synthesis of IGP and AICAR. The resulting ammonia molecule is channeled to the active site of HisF. This chain is Imidazole glycerol phosphate synthase subunit HisH, found in Prochlorococcus marinus (strain MIT 9312).